Reading from the N-terminus, the 256-residue chain is Small ribosomal subunit protein eS1 (256 aa).

Alanine 2 carries the post-translational modification N-acetylalanine; partial.

This sequence belongs to the eukaryotic ribosomal protein eS1 family. In terms of assembly, component of the small ribosomal subunit. Mature ribosomes consist of a small (40S) and a large (60S) subunit. The 40S subunit contains about 33 different proteins and 1 molecule of RNA (18S). The 60S subunit contains about 49 different proteins and 3 molecules of RNA (25S, 5.8S and 5S).

The protein localises to the cytoplasm. In Postia placenta (strain ATCC 44394 / Madison 698-R) (Brown rot fungus), this protein is Small ribosomal subunit protein eS1.